Reading from the N-terminus, the 145-residue chain is Large ribosomal subunit protein uL13 (145 aa).

It belongs to the universal ribosomal protein uL13 family. Part of the 50S ribosomal subunit.

This protein is one of the early assembly proteins of the 50S ribosomal subunit, although it is not seen to bind rRNA by itself. It is important during the early stages of 50S assembly. The sequence is that of Large ribosomal subunit protein uL13 from Staphylococcus epidermidis (strain ATCC 35984 / DSM 28319 / BCRC 17069 / CCUG 31568 / BM 3577 / RP62A).